Consider the following 274-residue polypeptide: SPbeta prophage-derived uncharacterized protein YomD (274 aa).

The protein is SPbeta prophage-derived uncharacterized protein YomD (yomD) of Bacillus subtilis (strain 168).